Reading from the N-terminus, the 321-residue chain is uncharacterized protein (321 aa).

Residue Tyr-49 is the Proton donor of the active site. Substrate is bound at residue His-106.

Belongs to the aldo/keto reductase family.

This is an uncharacterized protein from Caenorhabditis elegans.